We begin with the raw amino-acid sequence, 99 residues long: Aspartyl/glutamyl-tRNA(Asn/Gln) amidotransferase subunit C (99 aa).

Belongs to the GatC family. Heterotrimer of A, B and C subunits.

The enzyme catalyses L-glutamyl-tRNA(Gln) + L-glutamine + ATP + H2O = L-glutaminyl-tRNA(Gln) + L-glutamate + ADP + phosphate + H(+). It catalyses the reaction L-aspartyl-tRNA(Asn) + L-glutamine + ATP + H2O = L-asparaginyl-tRNA(Asn) + L-glutamate + ADP + phosphate + 2 H(+). Its function is as follows. Allows the formation of correctly charged Asn-tRNA(Asn) or Gln-tRNA(Gln) through the transamidation of misacylated Asp-tRNA(Asn) or Glu-tRNA(Gln) in organisms which lack either or both of asparaginyl-tRNA or glutaminyl-tRNA synthetases. The reaction takes place in the presence of glutamine and ATP through an activated phospho-Asp-tRNA(Asn) or phospho-Glu-tRNA(Gln). The sequence is that of Aspartyl/glutamyl-tRNA(Asn/Gln) amidotransferase subunit C from Sulfurihydrogenibium sp. (strain YO3AOP1).